We begin with the raw amino-acid sequence, 70 residues long: DNA-directed RNA polymerase subunit omega (70 aa).

Belongs to the RNA polymerase subunit omega family. In terms of assembly, the RNAP catalytic core consists of 2 alpha, 1 beta, 1 beta' and 1 omega subunit. When a sigma factor is associated with the core the holoenzyme is formed, which can initiate transcription.

It carries out the reaction RNA(n) + a ribonucleoside 5'-triphosphate = RNA(n+1) + diphosphate. Its function is as follows. Promotes RNA polymerase assembly. Latches the N- and C-terminal regions of the beta' subunit thereby facilitating its interaction with the beta and alpha subunits. This chain is DNA-directed RNA polymerase subunit omega, found in Marinobacter nauticus (strain ATCC 700491 / DSM 11845 / VT8) (Marinobacter aquaeolei).